The sequence spans 394 residues: Quinolinate synthase (394 aa).

Positions 57 and 74 each coordinate iminosuccinate. A [4Fe-4S] cluster-binding site is contributed by cysteine 121. Iminosuccinate is bound by residues tyrosine 153–asparagine 155 and serine 174. Cysteine 250 is a binding site for [4Fe-4S] cluster. Residues histidine 276–glutamate 278 and threonine 293 each bind iminosuccinate. Cysteine 340 serves as a coordination point for [4Fe-4S] cluster.

Belongs to the quinolinate synthase family. Type 3 subfamily. [4Fe-4S] cluster is required as a cofactor.

The protein localises to the cytoplasm. It carries out the reaction iminosuccinate + dihydroxyacetone phosphate = quinolinate + phosphate + 2 H2O + H(+). Its pathway is cofactor biosynthesis; NAD(+) biosynthesis; quinolinate from iminoaspartate: step 1/1. Its function is as follows. Catalyzes the condensation of iminoaspartate with dihydroxyacetone phosphate to form quinolinate. In Nocardioides sp. (strain ATCC BAA-499 / JS614), this protein is Quinolinate synthase.